The primary structure comprises 95 residues: Putative septation protein SpoVG (95 aa).

This sequence belongs to the SpoVG family.

Functionally, could be involved in septation. The sequence is that of Putative septation protein SpoVG from Clostridium acetobutylicum (strain ATCC 824 / DSM 792 / JCM 1419 / IAM 19013 / LMG 5710 / NBRC 13948 / NRRL B-527 / VKM B-1787 / 2291 / W).